Here is a 506-residue protein sequence, read N- to C-terminus: RNA-splicing ligase RtcB homolog (506 aa).

Residues aspartate 120, cysteine 123, histidine 228, histidine 260, and histidine 354 each contribute to the Mn(2+) site. Residue 227–231 (NHYAE) coordinates GMP. Residues 354–355 (HN), 403–406 (GGSM), serine 410, 429–432 (HGAG), and lysine 505 each bind GMP. The active-site GMP-histidine intermediate is the histidine 429.

Belongs to the RtcB family. As to quaternary structure, catalytic component of the tRNA-splicing ligase complex. The cofactor is Mn(2+).

It carries out the reaction a 3'-end 3'-phospho-ribonucleotide-RNA + a 5'-end dephospho-ribonucleoside-RNA + GTP = a ribonucleotidyl-ribonucleotide-RNA + GMP + diphosphate. It catalyses the reaction a 3'-end 2',3'-cyclophospho-ribonucleotide-RNA + a 5'-end dephospho-ribonucleoside-RNA + GTP + H2O = a ribonucleotidyl-ribonucleotide-RNA + GMP + diphosphate + H(+). Its function is as follows. Catalytic subunit of the tRNA-splicing ligase complex that acts by directly joining spliced tRNA halves to mature-sized tRNAs by incorporating the precursor-derived splice junction phosphate into the mature tRNA as a canonical 3',5'-phosphodiester. May act as an RNA ligase with broad substrate specificity, and may function toward other RNAs. The protein is RNA-splicing ligase RtcB homolog of Aedes aegypti (Yellowfever mosquito).